The chain runs to 92 residues: MANSPSAKKRAKQAEKRRSHNASLRSMVRTYIKNVVKAIAAKDLELAKTAYTAAVPVIDRMADKGIIHKNKAARHKSRLNAHIKALGEAAAA.

Residues 1-23 (MANSPSAKKRAKQAEKRRSHNAS) are disordered. Positions 7 to 20 (AKKRAKQAEKRRSH) are enriched in basic residues.

Belongs to the bacterial ribosomal protein bS20 family.

Its function is as follows. Binds directly to 16S ribosomal RNA. This Ectopseudomonas mendocina (strain ymp) (Pseudomonas mendocina) protein is Small ribosomal subunit protein bS20.